A 591-amino-acid chain; its full sequence is Reduced folate transporter (591 aa).

Residue methionine 1 is modified to N-acetylmethionine. At 1 to 29 (MVPSSPAVEKQVPVEPGPDPELRSWRHLV) the chain is on the cytoplasmic side. Phosphoserine is present on serine 5. The chain crosses the membrane as a helical span at residues 30-50 (CYLCFYGFMAQIRPGESFITP). 2 residues coordinate folate: isoleucine 48 and threonine 49. The Extracellular segment spans residues 51-64 (YLLGPDKNFTREQV). N-linked (GlcNAc...) asparagine glycosylation occurs at asparagine 58. Residues 65-87 (TNEITPVLSYSYLAVLVPVFLLT) form a helical membrane-spanning segment. Topologically, residues 88–91 (DYLR) are cytoplasmic. Residues 92 to 112 (YTPVLLLQGLSFVSVWLLLLL) form a helical membrane-spanning segment. The Extracellular segment spans residues 113-116 (GHSV). The chain crosses the membrane as a helical span at residues 117 to 139 (AHMQLMELFYSVTMAARIAYSSY). The folate site is built by glutamate 123 and arginine 133. 2',3'-cGAMP is bound by residues arginine 133, isoleucine 134, serine 137, tyrosine 149, and arginine 157. Topologically, residues 140-153 (IFSLVRPARYQRVA) are cytoplasmic. The helical transmembrane segment at 154 to 178 (GYSRAAVLLGVFTSSVLGQLLVTVG) threads the bilayer. Valine 164 lines the folate pocket. The Extracellular portion of the chain corresponds to 179–183 (RVSFS). The chain crosses the membrane as a helical span at residues 184-202 (TLNYISLAFLTFSVVLALF). Residues 203–266 (LKRPKRSLFF…ELGDSLRRPQ (64 aa)) lie on the Cytoplasmic side of the membrane. At serine 225 the chain carries Phosphoserine. A helical transmembrane segment spans residues 267–292 (LRLWSLWWVFNSAGYYLVVYYVHILW). Folate contacts are provided by tyrosine 281, tyrosine 282, and tyrosine 286. Tyrosine 282 is a 2',3'-cGAMP binding site. Topologically, residues 293 to 304 (NEVDPTTNSARV) are extracellular. The helical transmembrane segment at 305–327 (YNGAADAASTLLGAITSFAAGFV) threads the bilayer. Serine 321 is a 2',3'-cGAMP binding site. Residues 328 to 333 (KIRWAR) are Cytoplasmic-facing. The chain crosses the membrane as a helical span at residues 334–354 (WSKLLIAGVTATQAGLVFLLA). Over 355–360 (HTRHPS) the chain is Extracellular. The chain crosses the membrane as a helical span at residues 361 to 384 (SIWLCYAAFVLFRGSYQFLVPIAT). Folate-binding residues include arginine 373 and glutamine 377. 6 residues coordinate 2',3'-cGAMP: glutamine 377, proline 381, threonine 384, lysine 393, cysteine 396, and phenylalanine 400. Residues 385-398 (FQIASSLSKELCAL) lie on the Cytoplasmic side of the membrane. Residues 399-422 (VFGVNTFFATIVKTIITFIVSDVR) traverse the membrane as a helical segment. Positions 407-419 (ATIVKTIITFIVS) are required for substrate-binding. At 423–430 (GLGLPVRK) the chain is on the extracellular side. A helical transmembrane segment spans residues 431–455 (QFQLYSVYFLILSIIYFLGAMLDGL). Residues 456 to 591 (RHCQRGHHPR…PSDGVQNVNQ (136 aa)) are Cytoplasmic-facing. Serine 474, serine 485, serine 499, and serine 503 each carry phosphoserine.

Belongs to the reduced folate carrier (RFC) transporter (TC 2.A.48) family. In terms of tissue distribution, placenta, liver, and to a much smaller extent, in lung.

It is found in the cell membrane. It localises to the apical cell membrane. The protein resides in the basolateral cell membrane. It catalyses the reaction 5-amino-1-(5-phospho-beta-D-ribosyl)imidazole-4-carboxamide(in) + (6S)-5-methyl-5,6,7,8-tetrahydrofolate(out) = 5-amino-1-(5-phospho-beta-D-ribosyl)imidazole-4-carboxamide(out) + (6S)-5-methyl-5,6,7,8-tetrahydrofolate(in). The enzyme catalyses 2',3'-cGAMP(out) + 5-amino-1-(5-phospho-beta-D-ribosyl)imidazole-4-carboxamide(in) = 2',3'-cGAMP(in) + 5-amino-1-(5-phospho-beta-D-ribosyl)imidazole-4-carboxamide(out). The catalysed reaction is 3',3'-cGAMP(out) + 5-amino-1-(5-phospho-beta-D-ribosyl)imidazole-4-carboxamide(in) = 3',3'-cGAMP(in) + 5-amino-1-(5-phospho-beta-D-ribosyl)imidazole-4-carboxamide(out). In terms of biological role, antiporter that mediates the import of reduced folates or a subset of cyclic dinucleotides, driven by the export of organic anions. Acts as an importer of immunoreactive cyclic dinucleotides, such as cyclic GMP-AMP (2'-3'-cGAMP), an immune messenger produced in response to DNA virus in the cytosol, and its linkage isomer 3'-3'-cGAMP, thus playing a role in triggering larger immune responses. Mechanistically, acts as a secondary active transporter, which exports intracellular organic anions down their concentration gradients to facilitate the uptake of its substrates. Has high affinity for N5-methyltetrahydrofolate, the predominant circulating form of folate. Also mediates the import of antifolate drug methotrexate. 5-amino-4-imidazolecarboxamide riboside (AICAR), when phosphorylated to AICAR monophosphate, can serve as an organic anion for antiporter activity. In Homo sapiens (Human), this protein is Reduced folate transporter.